The sequence spans 405 residues: Intraflagellar transport protein 57 homolog (405 aa).

Residues Glu252 to Leu380 are a coiled coil.

It belongs to the IFT57 family.

It localises to the cytoplasm. The protein resides in the cytoskeleton. Its subcellular location is the cilium basal body. Functionally, required for the formation of cilia. This is Intraflagellar transport protein 57 homolog from Drosophila melanogaster (Fruit fly).